A 231-amino-acid chain; its full sequence is Ninja-family protein AFP3 (231 aa).

Positions Ala-83–Ala-96 are enriched in basic residues. Residues Ala-83–Gly-152 form a disordered region. Residues Gln-130–Gly-152 are compositionally biased toward polar residues.

This sequence belongs to the Ninja family. In terms of assembly, forms a heterodimer with AFP2. Interacts with ABI5/DPBF1, DPBF2, AREB3/DPBF3, EEL/DPBF4, ABF1, ABF3/DPBF5 and ABF4/AREB2.

The protein localises to the nucleus. In terms of biological role, acts as a negative regulator of abscisic acid (ABA) response and stress responses. The polypeptide is Ninja-family protein AFP3 (AFP3) (Arabidopsis thaliana (Mouse-ear cress)).